Reading from the N-terminus, the 332-residue chain is 2,3-diketo-L-gulonate reductase (332 aa).

Catalysis depends on H44, which acts as the Proton donor. Residues 168 to 174 (ITMVDMS), 224 to 225 (WK), and 304 to 306 (GHE) contribute to the NAD(+) site.

This sequence belongs to the LDH2/MDH2 oxidoreductase family. DlgD subfamily. As to quaternary structure, homodimer.

It is found in the cytoplasm. The enzyme catalyses 3-dehydro-L-gulonate + NAD(+) = 2,3-dioxo-L-gulonate + NADH + H(+). It carries out the reaction 3-dehydro-L-gulonate + NADP(+) = 2,3-dioxo-L-gulonate + NADPH + H(+). Functionally, catalyzes the reduction of 2,3-diketo-L-gulonate in the presence of NADH, to form 3-keto-L-gulonate. The protein is 2,3-diketo-L-gulonate reductase of Escherichia coli (strain K12 / MC4100 / BW2952).